A 490-amino-acid chain; its full sequence is Hippocampus abundant transcript 1 protein (490 aa).

Methionine 1 carries the N-acetylmethionine modification. The Extracellular portion of the chain corresponds to 1-40 (MTQGKKKKRAANRSIMLAKKIIIKDGGTPQGIGSPSVYHA). Asparagine 12 carries an N-linked (GlcNAc...) asparagine glycan. Residues 41–61 (VIVIFLEFFAWGLLTAPTLVV) traverse the membrane as a helical segment. Over 62-74 (LHETFPKHTFLMN) the chain is Cytoplasmic. The helical transmembrane segment at 75–95 (GLIQGVKGLLSFLSAPLIGAL) threads the bilayer. Residues 96-103 (SDVWGRKS) lie on the Extracellular side of the membrane. Residues 104 to 124 (FLLLTVFFTCAPIPLMKISPW) form a helical membrane-spanning segment. Over 125–126 (WY) the chain is Cytoplasmic. A helical membrane pass occupies residues 127–147 (FAVISVSGVFAVTFSVVFAYV). Topologically, residues 148-160 (ADITQEHERSMAY) are extracellular. The chain crosses the membrane as a helical span at residues 161–181 (GLVSATFAASLVTSPAIGAYL). At 182–188 (GRVYGDS) the chain is on the cytoplasmic side. A helical transmembrane segment spans residues 189–209 (LVVVLATAIALLDICFILVAV). The Extracellular segment spans residues 210 to 243 (PESLPEKMRPASWGAPISWEQADPFASLKKVGQD). A helical transmembrane segment spans residues 244–264 (SIVLLICITVFLSYLPEAGQY). Over 265-284 (SSFFLYLRQIMKFSPESVAA) the chain is Cytoplasmic. Residues 285–305 (FIAVLGILSIIAQTIVLSLLM) traverse the membrane as a helical segment. The Extracellular segment spans residues 306–313 (RSIGNKNT). A helical membrane pass occupies residues 314 to 334 (ILLGLGFQILQLAWYGFGSEP). The Cytoplasmic segment spans residues 335 to 337 (WMM). A helical membrane pass occupies residues 338–358 (WAAGAVAAMSSITFPAVSALV). Over 359-379 (SRTADADQQGVVQGMITGIRG) the chain is Extracellular. A helical membrane pass occupies residues 380-400 (LCNGLGPALYGFIFYIFHVEL). Residues 401–427 (KELPITGTDLGTNTSPQHHFEQNSIIP) are Cytoplasmic-facing. The helical transmembrane segment at 428–448 (GPPFLFGACSVLLALLVALFI) threads the bilayer. Topologically, residues 449 to 490 (PEHTNLSLRSSSWRKHCGSHSHPHSTQAPGEAKEPLLQDTNV) are extracellular. A glycan (N-linked (GlcNAc...) asparagine) is linked at asparagine 453. A disordered region spans residues 466 to 490 (GSHSHPHSTQAPGEAKEPLLQDTNV).

This sequence belongs to the major facilitator superfamily. Expressed in various tissues.

It is found in the membrane. The polypeptide is Hippocampus abundant transcript 1 protein (Mus musculus (Mouse)).